The following is a 404-amino-acid chain: Serine/threonine transporter SstT (404 aa).

8 helical membrane-spanning segments follow: residues 17–37, 39–59, 75–95, 138–158, 179–199, 212–232, 287–307, and 313–333; these read IGIG…LTGF, ILGK…VFAL, MTLI…VAVL, ALAT…GLAL, IVVW…FTTI, FLIL…NPLI, IPLG…VLTL, and FGIP…AVSA.

The protein belongs to the dicarboxylate/amino acid:cation symporter (DAACS) (TC 2.A.23) family.

It is found in the cell membrane. The catalysed reaction is L-serine(in) + Na(+)(in) = L-serine(out) + Na(+)(out). The enzyme catalyses L-threonine(in) + Na(+)(in) = L-threonine(out) + Na(+)(out). In terms of biological role, involved in the import of serine and threonine into the cell, with the concomitant import of sodium (symport system). This chain is Serine/threonine transporter SstT, found in Streptococcus pyogenes serotype M5 (strain Manfredo).